Reading from the N-terminus, the 422-residue chain is Serine--tRNA ligase (422 aa).

229–231 (TAE) lines the L-serine pocket. 258–260 (RRE) lines the ATP pocket. Glutamate 281 is an L-serine binding site. 345 to 348 (EISS) provides a ligand contact to ATP. Serine 379 serves as a coordination point for L-serine.

Belongs to the class-II aminoacyl-tRNA synthetase family. Type-1 seryl-tRNA synthetase subfamily. Homodimer. The tRNA molecule binds across the dimer.

It is found in the cytoplasm. The enzyme catalyses tRNA(Ser) + L-serine + ATP = L-seryl-tRNA(Ser) + AMP + diphosphate + H(+). It catalyses the reaction tRNA(Sec) + L-serine + ATP = L-seryl-tRNA(Sec) + AMP + diphosphate + H(+). Its pathway is aminoacyl-tRNA biosynthesis; selenocysteinyl-tRNA(Sec) biosynthesis; L-seryl-tRNA(Sec) from L-serine and tRNA(Sec): step 1/1. Its function is as follows. Catalyzes the attachment of serine to tRNA(Ser). Is also able to aminoacylate tRNA(Sec) with serine, to form the misacylated tRNA L-seryl-tRNA(Sec), which will be further converted into selenocysteinyl-tRNA(Sec). The protein is Serine--tRNA ligase of Methanosarcina mazei (strain ATCC BAA-159 / DSM 3647 / Goe1 / Go1 / JCM 11833 / OCM 88) (Methanosarcina frisia).